A 145-amino-acid polypeptide reads, in one-letter code: D-aminoacyl-tRNA deacylase (145 aa).

Residues 137-138 (GP) carry the Gly-cisPro motif, important for rejection of L-amino acids motif.

Belongs to the DTD family. In terms of assembly, homodimer.

Its subcellular location is the cytoplasm. The catalysed reaction is glycyl-tRNA(Ala) + H2O = tRNA(Ala) + glycine + H(+). It carries out the reaction a D-aminoacyl-tRNA + H2O = a tRNA + a D-alpha-amino acid + H(+). An aminoacyl-tRNA editing enzyme that deacylates mischarged D-aminoacyl-tRNAs. Also deacylates mischarged glycyl-tRNA(Ala), protecting cells against glycine mischarging by AlaRS. Acts via tRNA-based rather than protein-based catalysis; rejects L-amino acids rather than detecting D-amino acids in the active site. By recycling D-aminoacyl-tRNA to D-amino acids and free tRNA molecules, this enzyme counteracts the toxicity associated with the formation of D-aminoacyl-tRNA entities in vivo and helps enforce protein L-homochirality. The protein is D-aminoacyl-tRNA deacylase of Lactobacillus helveticus (strain DPC 4571).